We begin with the raw amino-acid sequence, 382 residues long: Galactokinase (382 aa).

Residue 34–37 (EHTD) coordinates substrate. An ATP-binding site is contributed by 124–130 (GAGLSSS). 2 residues coordinate Mg(2+): Ser130 and Glu162. Residue Asp174 is the Proton acceptor of the active site. Tyr223 provides a ligand contact to substrate.

Belongs to the GHMP kinase family. GalK subfamily.

It is found in the cytoplasm. The catalysed reaction is alpha-D-galactose + ATP = alpha-D-galactose 1-phosphate + ADP + H(+). The protein operates within carbohydrate metabolism; galactose metabolism. In terms of biological role, catalyzes the transfer of the gamma-phosphate of ATP to D-galactose to form alpha-D-galactose-1-phosphate (Gal-1-P). This is Galactokinase from Cronobacter sakazakii (strain ATCC BAA-894) (Enterobacter sakazakii).